The sequence spans 1399 residues: DNA-directed RNA polymerase subunit beta' (1399 aa).

Residues Cys70, Cys72, Cys85, and Cys88 each coordinate Zn(2+). Asp460, Asp462, and Asp464 together coordinate Mg(2+). Positions 814, 888, 895, and 898 each coordinate Zn(2+).

This sequence belongs to the RNA polymerase beta' chain family. In terms of assembly, the RNAP catalytic core consists of 2 alpha, 1 beta, 1 beta' and 1 omega subunit. When a sigma factor is associated with the core the holoenzyme is formed, which can initiate transcription. Requires Mg(2+) as cofactor. The cofactor is Zn(2+).

It carries out the reaction RNA(n) + a ribonucleoside 5'-triphosphate = RNA(n+1) + diphosphate. Its function is as follows. DNA-dependent RNA polymerase catalyzes the transcription of DNA into RNA using the four ribonucleoside triphosphates as substrates. The polypeptide is DNA-directed RNA polymerase subunit beta' (Pseudomonas fluorescens (strain SBW25)).